A 231-amino-acid chain; its full sequence is 26S proteasome non-ATPase regulatory subunit 10 (231 aa).

ANK repeat units lie at residues 3-36 (GCVS…ATRT), 37-69 (DQDS…VNEK), 70-102 (DDAG…VNAV), 103-135 (NQNG…PDAK), 136-168 (NHYD…TNIQ), 169-201 (DTEG…IYIE), and 202-226 (NKEE…IAES).

In terms of assembly, part of transient complex containing PSMD10, PSMC4, PSMC5 and PAAF1 formed during the assembly of the 26S proteasome. Stays associated throughout the assembly of the PA700/19S RC and is released upon association with the 20S core. Interacts with PSMC4. Interacts with RB1. Interacts with CDK4. Interacts with MDM2. Interacts with RELA. Associates with a CDK4:CCND2 serine/threonine kinase complex. Interacts with ARHGDIA and increases the interaction between ARHGDIA and RHOA, hence promotes ARHGDIA inactivation of RHOA and ROCK.

It localises to the cytoplasm. It is found in the nucleus. Acts as a chaperone during the assembly of the 26S proteasome, specifically of the PA700/19S regulatory complex (RC). In the initial step of the base subcomplex assembly is part of an intermediate PSMD10:PSMC4:PSMC5:PAAF1 module which probably assembles with a PSMD5:PSMC2:PSMC1:PSMD2 module. Independently of the proteasome, regulates EGF-induced AKT activation through inhibition of the RHOA/ROCK/PTEN pathway, leading to prolonged AKT activation. Plays an important role in RAS-induced tumorigenesis. Its function is as follows. Acts as an oncoprotein by being involved in negative regulation of tumor suppressors RB1 and p53/TP53. Overexpression is leading to phosphorylation of RB1 and proteasomal degradation of RB1. Regulates CDK4-mediated phosphorylation of RB1 by competing with CDKN2A for binding with CDK4. Facilitates binding of MDM2 to p53/TP53 and the mono- and polyubiquitination of p53/TP53 by MDM2 suggesting a function in targeting the TP53:MDM2 complex to the 26S proteasome. Involved in p53-independent apoptosis. Involved in regulation of NF-kappa-B by retaining it in the cytoplasm. Binds to the NF-kappa-B component RELA and accelerates its XPO1/CRM1-mediated nuclear export. The sequence is that of 26S proteasome non-ATPase regulatory subunit 10 (Psmd10) from Rattus norvegicus (Rat).